A 249-amino-acid chain; its full sequence is ATP synthase subunit a, chloroplastic (249 aa).

The next 5 helical transmembrane spans lie at 40–60 (QVLI…VLAI), 97–117 (VPFI…GALL), 136–156 (INTT…AGLS), 201–221 (LVVV…VMFL), and 222–242 (GLFT…AYIG).

This sequence belongs to the ATPase A chain family. F-type ATPases have 2 components, CF(1) - the catalytic core - and CF(0) - the membrane proton channel. CF(1) has five subunits: alpha(3), beta(3), gamma(1), delta(1), epsilon(1). CF(0) has four main subunits: a, b, b' and c.

It localises to the plastid. The protein resides in the chloroplast thylakoid membrane. Its function is as follows. Key component of the proton channel; it plays a direct role in the translocation of protons across the membrane. This Lepidium virginicum (Virginia pepperweed) protein is ATP synthase subunit a, chloroplastic.